A 245-amino-acid polypeptide reads, in one-letter code: Thiamine phosphate phosphatase-like protein (245 aa).

Asp-9 (nucleophile) is an active-site residue. Positions 9, 11, and 179 each coordinate Mg(2+). Asp-11 serves as the catalytic Proton donor.

The protein belongs to the HAD-like hydrolase superfamily. In terms of assembly, monomer. Mg(2+) is required as a cofactor.

The catalysed reaction is thiamine phosphate + H2O = thiamine + phosphate. In terms of biological role, HAD-like hydrolase that has a thiamine monophosphate phosphatase activity in a heterologous system. Does not contribute to thiamine monophosphate phosphatase activity in planta. This chain is Thiamine phosphate phosphatase-like protein, found in Arabidopsis thaliana (Mouse-ear cress).